Consider the following 140-residue polypeptide: Lymphocyte antigen 6H (140 aa).

An N-terminal signal peptide occupies residues 1–25 (MLPAAMKGLGLALLAVLLCSAPAHG). The UPAR/Ly6 domain occupies 26-91 (LWCQDCTLTT…RHFFSDYLMG (66 aa)). 5 disulfide bridges follow: cysteine 28–cysteine 52, cysteine 31–cysteine 40, cysteine 45–cysteine 73, cysteine 77–cysteine 104, and cysteine 105–cysteine 110. Asparagine 36 carries N-linked (GlcNAc...) asparagine glycosylation. The GPI-anchor amidated glycine moiety is linked to residue glycine 115. The propeptide at 116 to 140 (AGHSPWALAGGLLLSLGPALLWAGP) is removed in mature form.

In terms of assembly, interacts with CHRNA4 and CHRNA7. As to expression, highly expressed in brain (cerebral cortex, amygdala, hippocampus and subthalamic nucleus) and in acute human leukemic cell line MOLT-3. Also found in lower levels in testis, pancreas, small intestine and colon.

It is found in the cell membrane. Believed to act as a modulator of nicotinic acetylcholine receptors (nAChRs) activity. In vitro inhibits alpha-3:beta-4-containing nAChRs maximum response. May play a role in the intracellular trafficking of alpha-7-containing nAChRs and may inhibit their expression at the cell surface. Seems to inhibit alpha-7/CHRNA7 signaling in hippocampal neurons. The polypeptide is Lymphocyte antigen 6H (LY6H) (Homo sapiens (Human)).